The primary structure comprises 341 residues: UDP-N-acetyl-alpha-D-glucosaminouronate 4-epimerase (341 aa).

Positions 27, 28, 47, 50, 51, 52, 78, 79, and 98 each coordinate NAD(+). Residue Ser-103 coordinates UDP-N-acetyl-alpha-D-galactosamine. An NAD(+)-binding site is contributed by Thr-117. The UDP-N-acetyl-alpha-D-galactosamine site is built by Ser-142, Ser-143, and Tyr-166. NAD(+)-binding residues include Tyr-166 and Lys-170. Tyr-166 (proton acceptor) is an active-site residue. Asn-195 lines the UDP-N-acetyl-alpha-D-galactosamine pocket. NAD(+) is bound at residue Val-196. UDP-N-acetyl-alpha-D-galactosamine contacts are provided by Val-210, Tyr-225, Asn-227, Arg-234, Arg-299, and Asp-302.

It belongs to the NAD(P)-dependent epimerase/dehydratase family. As to quaternary structure, homodimer. NAD(+) serves as cofactor.

It carries out the reaction UDP-2-acetamido-2-deoxy-alpha-D-glucuronate = UDP-2-acetamido-2-deoxy-alpha-D-galacturonate. The catalysed reaction is UDP-N-acetyl-alpha-D-glucosamine = UDP-N-acetyl-alpha-D-galactosamine. The protein operates within bacterial outer membrane biogenesis; LPS O-antigen biosynthesis. Epimerase required for the biosynthesis of the B-band O antigen of serotype O6 lipopolysaccharide. Catalyzes the reversible epimerization of UDP-N-acetylglucosaminuronic acid (UDP-GlcNAcA) to UDP-N-acetylgalactosaminuronic acid (UDP-GalNAcA). Also catalyzes the reversible epimerization of UDP-N-acetylglucosamine (UDP-GlcNAc) to UDP-N-acetylgalactosamine (UDP-GalNAc). Has very low epimerase activity with UDP-glucose (UDP-Glc) and UDP-galactose (UDP-Gal). In Pseudomonas aeruginosa, this protein is UDP-N-acetyl-alpha-D-glucosaminouronate 4-epimerase.